The primary structure comprises 121 residues: MARIAGVDIPRDKRVEVSLTYIYGVGPTRARTILAQTGVSPDIRVKDLEDGDLQKLRNAADDFTLEGDLRRQEGMALKRLQDIGCVRGRRHRMSLPVRGQRTRTNARTRRGARKTVAGKKK.

Positions 97–121 are disordered; it reads VRGQRTRTNARTRRGARKTVAGKKK. The segment covering 100 to 121 has biased composition (basic residues); that stretch reads QRTRTNARTRRGARKTVAGKKK.

Belongs to the universal ribosomal protein uS13 family. Part of the 30S ribosomal subunit. Forms a loose heterodimer with protein S19. Forms two bridges to the 50S subunit in the 70S ribosome.

In terms of biological role, located at the top of the head of the 30S subunit, it contacts several helices of the 16S rRNA. In the 70S ribosome it contacts the 23S rRNA (bridge B1a) and protein L5 of the 50S subunit (bridge B1b), connecting the 2 subunits; these bridges are implicated in subunit movement. Contacts the tRNAs in the A and P-sites. This is Small ribosomal subunit protein uS13 from Parasynechococcus marenigrum (strain WH8102).